The following is a 265-amino-acid chain: HUWE1-associated protein modifying stress responses (265 aa).

4 disordered regions span residues 1–22, 145–170, 195–218, and 240–265; these read MEDKKEEGESEIQEHGPEHWFS, RNSRAPPRLTVVSPNRATPTETGSSV, VRSSTPGSPTHVSGSSNTGRRRNG, and GTRKRSSAQCGDVITDSPTHKRNRMI. 2 stretches are compositionally biased toward polar residues: residues 156–170 and 195–212; these read VSPNRATPTETGSSV and VRSSTPGSPTHVSGSSNT.

This sequence belongs to the TAPR1 family. As to quaternary structure, oligomer.

Its subcellular location is the nucleus. It localises to the cytoplasm. In terms of biological role, acts as a central player within a network of stress response pathways promoting cellular adaptability. Functions as a negative regulator of TP53/P53 in the cellular response to telomere erosion and probably also DNA damage. The sequence is that of HUWE1-associated protein modifying stress responses from Xenopus laevis (African clawed frog).